The following is a 129-amino-acid chain: RxLR effector protein SFI6 (129 aa).

A signal peptide spans 1 to 16 (MTLVVLATGLLASGTA). The RxLR-dEER signature appears at 42-64 (RFLRSHQITDDKVEINEHGEEER).

Belongs to the RxLR effector family.

The protein resides in the secreted. The protein localises to the host cytoplasm. It is found in the host cell membrane. Its function is as follows. Effector that suppresses flg22-induced post-translational MAP kinase activation in tomato but not in Arabidopsis. The perception of highly conserved pathogen- or microbe-associated molecular patterns (PAMPs/MAMPs), such as flg22, triggers converging signaling pathways recruiting MAP kinase cascades and inducing transcriptional re-programming, yielding a generic antimicrobial response. This chain is RxLR effector protein SFI6, found in Phytophthora infestans (strain T30-4) (Potato late blight agent).